The chain runs to 150 residues: Probable FKBP-type 16 kDa peptidyl-prolyl cis-trans isomerase (150 aa).

Residues 14–88 form the PPIase FKBP-type domain; that stretch reads NTEVTLHFAL…PNPQNVQIIP (75 aa).

Belongs to the FKBP-type PPIase family.

It carries out the reaction [protein]-peptidylproline (omega=180) = [protein]-peptidylproline (omega=0). In terms of biological role, PPIases accelerate the folding of proteins. The polypeptide is Probable FKBP-type 16 kDa peptidyl-prolyl cis-trans isomerase (yaaD) (Pseudomonas fluorescens).